A 491-amino-acid chain; its full sequence is MATFKDACYHYKKLNKLNSLVLKLGANDEWRPAPVTKYKGWCLDCCQYTNLTYCRGCALYHVCQWCSQYNRCFLDEEPHLLRMRTFKDVVTKEDIEGLLTMYETLFPINEKLVNKFINFVKQRKCRNEYLLEWYNHLLMPITLQALTINLEDSAYYIFGYYDCMECENQTPFQFVNLLEKYDKLLLDDRNFHRMSHLPAILQQEYALRYFSKSRFLSKGKKRLSRHDFSDNLMEDRHSPTSLMQVVRNCISTHMNDCEWNKRCHVIVDAKNYISIMNSSYTEHYSVSQRCKLFTKYKFGIISKLVKPNYIFSNHESYALNVHNCKWCQINNHYKVWEDFRLRKIYNNIMDFIRALVKSNGNVGHCSSQESVYKYIPDIFLICKKEKWNEAVKMLFNYLEPVDINGTEYALLDYEVNWEVRGLVMQNMDGKVPRILNMNDTKKILSAIIFDWFDTRYMRETPMTTSTTNQLRTLNKKNELIDEYDLELSDVE.

The tract at residues 1–81 (MATFKDACYH…CFLDEEPHLL (81 aa)) is RNA-binding. A zinc-binding domain region spans residues 42-79 (CLDCCQYTNLTYCRGCALYHVCQWCSQYNRCFLDEEPH). The tract at residues 82–176 (RMRTFKDVVT…ENQTPFQFVN (95 aa)) is important for cytoskeleton localization. Residues 320-491 (NVHNCKWCQI…EYDLELSDVE (172 aa)) form an interaction with host IRF3 region. Positions 485-488 (LELS) match the pLxIS motif motif.

It belongs to the rotavirus NSP1 family. Interacts (via C-terminus) with host IRF3; this interaction leads to IRF3 degradation. Interacts with host IRF7; this interaction leads to IRF7 degradation. Interacts with host CUL1 and CUL3.

It localises to the host cytoplasm. Its subcellular location is the host cytoskeleton. Plays a role in the inhibition of host innate immunity by inducing the degradation of key host factors required to activate interferon production such as IRF3, IRF5 or IRF7. Associates with components of cullin RING ligases (CRLs) including CUL1 or CUL3, which are essential multisubunit ubiquitination complexes, to modulate their activities. The polypeptide is Non-structural protein 1 (Rotavirus A (isolate RVA/Cow/Thailand/A44/1988/G10P8[11]) (RV-A)).